Consider the following 218-residue polypeptide: Embryonic polyadenylate-binding protein 2-B (218 aa).

Disordered regions lie at residues 1-24 and 169-218; these read MSER…ELDD and RTNM…NNPY. In terms of domain architecture, RRM spans 93–170; sequence RSVYVGNVDY…RTIKVLPKRT (78 aa). Residues 198-209 show a composition bias toward basic residues; the sequence is QRPRGRPFRGRG.

In terms of assembly, homodimer; Upon poly(A) binding, undergoes a dimer-monomer transition that removes the polyproline motif from the RNA recognition site and allows it to be replaced by the adenosine nucleotides of poly(A).

The protein localises to the cytoplasm. Functionally, binds the poly(A) tail of mRNA. Unable to interact with the cap-binding complex and is therefore unlikely to be involved in translation initiation. This chain is Embryonic polyadenylate-binding protein 2-B (Pabpn1l-b), found in Xenopus laevis (African clawed frog).